The chain runs to 350 residues: Quercetin 2,3-dioxygenase (350 aa).

Residues 1-145 (DTSSLIVEDA…FYYLGTNATD (145 aa)) form a cupin 1 region. Cu cation-binding residues include His-66, His-68, and Glu-73. Residue His-66 participates in substrate binding. Glu-73 is a binding site for substrate. N-linked (GlcNAc...) asparagine glycosylation is found at Asn-90 and Asn-109. His-112 provides a ligand contact to Cu cation. Asn-142 carries N-linked (GlcNAc...) asparagine glycosylation. The interval 146 to 205 (TTHTPYIPSSSDSSSTTGPDSSTISTLQSFDVYAELSFTPRTDTVNGTAPANTVWHTGAN) is linker. A disordered region spans residues 148–167 (HTPYIPSSSDSSSTTGPDSS). Over residues 152-167 (IPSSSDSSSTTGPDSS) the composition is skewed to low complexity. N-linked (GlcNAc...) asparagine glycans are attached at residues Asn-191 and Asn-248. A cupin 2 region spans residues 206-350 (ALASTAGDPY…WSSVSFPADW (145 aa)).

Homodimer. Requires Cu cation as cofactor. In terms of processing, the N-linked glycan at Asn-191 consists of Man(5)-GlcNAc(2).

It carries out the reaction quercetin + O2 = 2-(3,4-dihydroxybenzoyloxy)-4,6-dihydroxybenzoate + CO. It participates in flavonoid metabolism; quercetin degradation. Inhibited by diethyldithiocarbamate and kojic acid. Its function is as follows. Performs the first step in the degradation of the flavonoid quercetin by a dioxygenase reaction. The enzyme catalyzes the cleavage of the O-heteroaromatic ring of the flavonol quercetin yielding the depside 2-protocatechuoyl-phloroglucinol carboxylic acid and carbon monoxide. This involves the remarkable dioxygenolytic cleavage of two carbon-carbon bonds. The polypeptide is Quercetin 2,3-dioxygenase (Aspergillus japonicus).